The following is a 160-amino-acid chain: 3-hydroxyacyl-[acyl-carrier-protein] dehydratase FabZ (160 aa).

Residue His-60 is part of the active site.

It belongs to the thioester dehydratase family. FabZ subfamily.

The protein localises to the cytoplasm. The enzyme catalyses a (3R)-hydroxyacyl-[ACP] = a (2E)-enoyl-[ACP] + H2O. Its function is as follows. Involved in unsaturated fatty acids biosynthesis. Catalyzes the dehydration of short chain beta-hydroxyacyl-ACPs and long chain saturated and unsaturated beta-hydroxyacyl-ACPs. This chain is 3-hydroxyacyl-[acyl-carrier-protein] dehydratase FabZ, found in Rhodospirillum rubrum (strain ATCC 11170 / ATH 1.1.1 / DSM 467 / LMG 4362 / NCIMB 8255 / S1).